A 619-amino-acid chain; its full sequence is Chaperone protein HscA homolog (619 aa).

The protein belongs to the heat shock protein 70 family.

Chaperone involved in the maturation of iron-sulfur cluster-containing proteins. Has a low intrinsic ATPase activity which is markedly stimulated by HscB. In Haemophilus influenzae (strain PittGG), this protein is Chaperone protein HscA homolog.